We begin with the raw amino-acid sequence, 315 residues long: Glycine--tRNA ligase alpha subunit (315 aa).

The protein belongs to the class-II aminoacyl-tRNA synthetase family. In terms of assembly, tetramer of two alpha and two beta subunits.

The protein localises to the cytoplasm. It catalyses the reaction tRNA(Gly) + glycine + ATP = glycyl-tRNA(Gly) + AMP + diphosphate. This is Glycine--tRNA ligase alpha subunit from Pseudomonas putida (strain W619).